The primary structure comprises 575 residues: G protein-coupled receptor kinase 4 (575 aa).

M1 carries the post-translational modification N-acetylmethionine. Residues 1-153 (MELENFMANT…DCAGVIYKYL (153 aa)) form an N-terminal region. An RGS domain is found at 51–171 (DFSSLCDQQP…QESTYYNRFL (121 aa)). Residues 186–448 (FRQYRVLGKG…ASAVKQHPIF (263 aa)) enclose the Protein kinase domain. ATP is bound by residues 192–200 (LGKGGFGEV) and K215. D311 serves as the catalytic Proton acceptor. One can recognise an AGC-kinase C-terminal domain in the interval 449–514 (KDINFSRLEA…GCVTIPWQNE (66 aa)). S484 carries the post-translational modification Phosphoserine.

It belongs to the protein kinase superfamily. AGC Ser/Thr protein kinase family. GPRK subfamily. In terms of assembly, interacts with DRD3. In terms of processing, palmitoylated. In terms of tissue distribution, isoform GRK4A is expressed in testis. Isoform GRK4B is heterogeneously distributed in the kidney, with 20-fold enrichment in the outer medulla. Has a widespread but low level of expression in tissues other than testis.

The protein localises to the cytoplasm. It localises to the cell cortex. The enzyme catalyses [G-protein-coupled receptor] + ATP = [G-protein-coupled receptor]-phosphate + ADP + H(+). With respect to regulation, inhibited by heparin. Functionally, specifically phosphorylates the activated forms of G protein-coupled receptors. Plays an important role in the regulation of renal sodium handling and blood pressure. In Rattus norvegicus (Rat), this protein is G protein-coupled receptor kinase 4 (Grk4).